The sequence spans 185 residues: Threonylcarbamoyl-AMP synthase (185 aa).

The YrdC-like domain occupies 1-185; that stretch reads MDNFEQVLNA…AKTSQILRQG (185 aa). Residues 163–185 form a disordered region; sequence ETSGRDKPSEIRDAKTSQILRQG. Basic and acidic residues predominate over residues 164-177; that stretch reads TSGRDKPSEIRDAK.

It belongs to the SUA5 family. TsaC subfamily.

Its subcellular location is the cytoplasm. The enzyme catalyses L-threonine + hydrogencarbonate + ATP = L-threonylcarbamoyladenylate + diphosphate + H2O. In terms of biological role, required for the formation of a threonylcarbamoyl group on adenosine at position 37 (t(6)A37) in tRNAs that read codons beginning with adenine. Catalyzes the conversion of L-threonine, HCO(3)(-)/CO(2) and ATP to give threonylcarbamoyl-AMP (TC-AMP) as the acyladenylate intermediate, with the release of diphosphate. This is Threonylcarbamoyl-AMP synthase from Vibrio parahaemolyticus serotype O3:K6 (strain RIMD 2210633).